We begin with the raw amino-acid sequence, 593 residues long: MEEHTQGSHVEAGIVEHPNAEDFGHARTLPTDTNWFKHAVFYEVLVRAFYDSNADGIGDLRGLTEKLDYIKWLGVDCLWLPPFYDSPLRDGGYDIRDFYKVLPEFGTVDDFVTLLDAAHRRGIRIITDLVMNHTSDQHEWFQESRHNPDGPYGDFYVWSDTSDRYPDARIIFVDTEESNWTFDPVRRQFYWHRFFSHQPDLNYDNPAVQEAMLDVLRFWLDLGIDGFRLDAVPYLFEREGTNCENLPETHAFLKRCRKAIDDEYPGRVLLAEANQWPADVVAYFGDPDTGGDECHMAFHFPLMPRIFMAVRRESRFPISEILAQTPPIPDTAQWGIFLRNHDELTLEMVTDEERDYMYAEYAKDPRMKANVGIRRRLAPLLENDRNQIELFTALLLSLPGSPVLYYGDEIGMGDIIWLGDRDSVRTPMQWTPDRNAGFSKATPGRLYLPPNQDAVYGYHSVNVEAQLDSSSSLLNWTRNMLAVRSRHDAFAVGTFRELGGSNPSVLAYIREVTRQQGDGGAKTDAVLCVNNLSRFPQPIELNLQQWAGYIPVEMTGYVEFPSIGQLPYLLTLPGHGFYWFQLREPDPEPGAQQ.

D90 contacts substrate. N132 provides a ligand contact to Ca(2+). Residues H133 and Q198 each coordinate substrate. D200 serves as a coordination point for Ca(2+). A substrate-binding site is contributed by R228. The active-site Nucleophile is D230. Ca(2+) is bound by residues Y234, L235, and E237. Residue E272 is the Proton donor of the active site. Residues H341 and D342 each coordinate substrate.

The protein belongs to the glycosyl hydrolase 13 family. TreS subfamily. Homohexamer.

The enzyme catalyses D-maltose = alpha,alpha-trehalose. The catalysed reaction is Endohydrolysis of (1-&gt;4)-alpha-D-glucosidic linkages in polysaccharides containing three or more (1-&gt;4)-alpha-linked D-glucose units.. It functions in the pathway glycan biosynthesis; glycogen biosynthesis. With respect to regulation, the amylase activity is stimulated by addition of Ca(2+), but this cation and other divalent cations inhibit the trehalose synthase activity. In addition, trehalose synthase activity, but not amylase activity, is strongly inhibited, and in a competitive manner, by validoxylamine. On the other hand, amylase, but not trehalose synthase activity, is inhibited by the known transition-state amylase inhibitor, acarbose, suggesting the possibility of two different active sites. Other metal ions such as Mg(2+), Mn(2+), and Co(2+) are also somewhat effective in the stimulation of amylase activity, but Hg(2+), Cu(2+), Ni(2+) and Zn(2+) are inhibitory. Its function is as follows. Catalyzes the reversible interconversion of maltose and trehalose by transglucosylation. Maltose is the preferred substrate. To a lesser extent, also displays amylase activity, catalyzing the endohydrolysis of (1-&gt;4)-alpha-D-glucosidic linkages in glycogen and maltooligosaccharides such as maltoheptaose, to produce maltose which then can be converted to trehalose. TreS plays a key role in the utilization of trehalose for the production of glycogen and alpha-glucan via the TreS-Pep2 branch involved in the biosynthesis of maltose-1-phosphate (M1P). Might also function as a sensor and/or regulator of trehalose levels within the cell. Thus, when trehalose levels in the cell become dangerously low, TreS can expedite the conversion of glycogen to maltose via its amylase activity and then convert the maltose to trehalose; but this enzyme also can expedite or promote the conversion of trehalose to glycogen when cytoplasmic trehalose levels become too high. Is also able to catalyze the hydrolytic cleavage of alpha-aryl glucosides, as well as alpha-glucosyl fluoride in vitro. In Mycolicibacterium smegmatis (strain ATCC 700084 / mc(2)155) (Mycobacterium smegmatis), this protein is Trehalose synthase/amylase TreS.